The following is a 222-amino-acid chain: Glutathione-specific gamma-glutamylcyclotransferase 1 (222 aa).

Residues 1–25 (MKQESAAQSTPPPSLSPAPSAQPSW) are disordered. 35-40 (IFGYGS) contributes to the substrate binding site. The active-site Proton acceptor is the E115.

Belongs to the gamma-glutamylcyclotransferase family. ChaC subfamily. Interacts with NOTCH1 (via extracellular region).

It is found in the cytoplasm. It localises to the cytosol. The protein resides in the golgi apparatus. Its subcellular location is the trans-Golgi network. The enzyme catalyses glutathione = L-cysteinylglycine + 5-oxo-L-proline. Its function is as follows. Catalyzes the cleavage of glutathione into 5-oxo-L-proline and a Cys-Gly dipeptide. Acts specifically on glutathione, but not on other gamma-glutamyl peptides. Glutathione depletion is an important factor for apoptosis initiation and execution. Acts as a pro-apoptotic component of the unfolded protein response pathway by mediating the pro-apoptotic effects of the ATF4-ATF3-DDIT3/CHOP cascade. Negative regulator of Notch signaling pathway involved in embryonic neurogenesis: acts by inhibiting Notch cleavage by furin, maintaining Notch in an immature inactive form, thereby promoting neurogenesis in embryos. The polypeptide is Glutathione-specific gamma-glutamylcyclotransferase 1 (Rattus norvegicus (Rat)).